A 782-amino-acid polypeptide reads, in one-letter code: Vacuolar import and degradation protein 27 (782 aa).

Phosphoserine occurs at positions 170, 195, and 196. The span at 188–200 shows a compositional bias: acidic residues; sequence DDDDELDSSSDDF. Residues 188 to 215 form a disordered region; the sequence is DDDDELDSSSDDFQDAKDTSFEHEKESE. Over residues 201–215 the composition is skewed to basic and acidic residues; the sequence is QDAKDTSFEHEKESE. Serine 222 is subject to Phosphoserine. The segment covering 372-384 has biased composition (basic and acidic residues); sequence DDRSNEERDKESS. The segment at 372–422 is disordered; the sequence is DDRSNEERDKESSESENDSEDEDDENDHSKRIISSEAFEEPRRATSKGNSS. A compositionally biased stretch (acidic residues) spans 385-397; sequence ESENDSEDEDDEN. Threonine 486 is subject to Phosphothreonine.

The protein belongs to the VID27 family.

It localises to the cytoplasm. Has a role in the negative regulation of gluconeogenesis. Required for vacuolar catabolite degradation of fructose-1,6-bisphosphatase (FBPase). The polypeptide is Vacuolar import and degradation protein 27 (VID27) (Saccharomyces cerevisiae (strain ATCC 204508 / S288c) (Baker's yeast)).